The sequence spans 71 residues: ATP synthase subunit c (71 aa).

2 helical membrane passes run 9-29 (MIGYGLAAIGSAIGVGLIFAA) and 49-69 (LLGFALAEALAILGLVFAFVI).

Belongs to the ATPase C chain family. As to quaternary structure, F-type ATPases have 2 components, F(1) - the catalytic core - and F(0) - the membrane proton channel. F(1) has five subunits: alpha(3), beta(3), gamma(1), delta(1), epsilon(1). F(0) has three main subunits: a(1), b(2) and c(10-14). The alpha and beta chains form an alternating ring which encloses part of the gamma chain. F(1) is attached to F(0) by a central stalk formed by the gamma and epsilon chains, while a peripheral stalk is formed by the delta and b chains.

It localises to the cell membrane. In terms of biological role, f(1)F(0) ATP synthase produces ATP from ADP in the presence of a proton or sodium gradient. F-type ATPases consist of two structural domains, F(1) containing the extramembraneous catalytic core and F(0) containing the membrane proton channel, linked together by a central stalk and a peripheral stalk. During catalysis, ATP synthesis in the catalytic domain of F(1) is coupled via a rotary mechanism of the central stalk subunits to proton translocation. Key component of the F(0) channel; it plays a direct role in translocation across the membrane. A homomeric c-ring of between 10-14 subunits forms the central stalk rotor element with the F(1) delta and epsilon subunits. The sequence is that of ATP synthase subunit c from Micrococcus luteus (strain ATCC 4698 / DSM 20030 / JCM 1464 / CCM 169 / CCUG 5858 / IAM 1056 / NBRC 3333 / NCIMB 9278 / NCTC 2665 / VKM Ac-2230) (Micrococcus lysodeikticus).